A 94-amino-acid chain; its full sequence is Co-chaperonin GroES (94 aa).

It belongs to the GroES chaperonin family. Heptamer of 7 subunits arranged in a ring. Interacts with the chaperonin GroEL.

The protein localises to the cytoplasm. Together with the chaperonin GroEL, plays an essential role in assisting protein folding. The GroEL-GroES system forms a nano-cage that allows encapsulation of the non-native substrate proteins and provides a physical environment optimized to promote and accelerate protein folding. GroES binds to the apical surface of the GroEL ring, thereby capping the opening of the GroEL channel. The sequence is that of Co-chaperonin GroES from Clostridium perfringens (strain ATCC 13124 / DSM 756 / JCM 1290 / NCIMB 6125 / NCTC 8237 / Type A).